Reading from the N-terminus, the 304-residue chain is Protoheme IX farnesyltransferase (304 aa).

Transmembrane regions (helical) follow at residues 31–51 (VNTL…PDGL), 58–78 (VAAT…NCLI), 99–119 (LAPA…LTVL), 126–146 (LTMW…TVLL), 154–174 (IVIG…AVTG), 180–200 (ALLL…ALAL), 222–242 (FTRL…LLPF), 243–263 (ATRM…IGFL), and 284–304 (FSIL…YLPL).

The protein belongs to the UbiA prenyltransferase family. Protoheme IX farnesyltransferase subfamily.

The protein resides in the cell inner membrane. The catalysed reaction is heme b + (2E,6E)-farnesyl diphosphate + H2O = Fe(II)-heme o + diphosphate. The protein operates within porphyrin-containing compound metabolism; heme O biosynthesis; heme O from protoheme: step 1/1. Converts heme B (protoheme IX) to heme O by substitution of the vinyl group on carbon 2 of heme B porphyrin ring with a hydroxyethyl farnesyl side group. This is Protoheme IX farnesyltransferase from Aromatoleum aromaticum (strain DSM 19018 / LMG 30748 / EbN1) (Azoarcus sp. (strain EbN1)).